The chain runs to 278 residues: Ras-related protein Rab-40B (278 aa).

The GTP site is built by Ser-23, Gly-26, and Lys-27. Residues 41–49 (SPYGHPAGI) form a switch-I region. A Mg(2+)-binding site is contributed by Asp-69. GTP is bound by residues Gly-72, Asn-126, and Arg-127. Residues 72–88 (GQGRFCTIFRSYSRGAQ) form a switch-II region. The 54-residue stretch at 175-228 (LLRHGMDRLWRPSKVLSLQDLCCRAVVSCTPVHLVDKLPLPIALRSHLKSFSMA) folds into the SOCS box domain. Positions 242-278 (SLTTSSTHKRSSLRKVKLVRPPQSPPKNCTRNSCKIS) are disordered. Residues 248–259 (THKRSSLRKVKL) are compositionally biased toward basic residues. The segment covering 267-278 (PKNCTRNSCKIS) has biased composition (polar residues). A lipid anchor (S-palmitoyl cysteine) is attached at Cys-270. The S-geranylgeranyl cysteine moiety is linked to residue Cys-275.

This sequence belongs to the small GTPase superfamily. Rab family. Component of the cullin-5-RING E3 ubiquitin-protein ligase complex (ECS(RAB40B) complex) composed of CUL5, Elongin BC (ELOB and ELOC), RNF7/RBX2 and RAB40B; RAB40B interaction with ECS complex is GTP-independent. Binds (GTP-bound) LIMA1; interaction promotes LIMA1 subcellular localization in lamellipodia during cell migration. Interacts (GTP-bound) with TKS5/SH3PXD2A (via PX domain); interaction promotes invadopodia-mediated extracellular matrix degradation. Mg(2+) is required as a cofactor.

The protein localises to the cell membrane. It localises to the cytoplasm. It is found in the cytosol. Its subcellular location is the cell projection. The protein resides in the lamellipodium membrane. The protein localises to the ruffle. It carries out the reaction GTP + H2O = GDP + phosphate + H(+). The protein operates within protein modification; protein ubiquitination. With respect to regulation, regulated by guanine nucleotide exchange factors (GEFs) which promote the exchange of bound GDP for free GTP. Regulated by GTPase activating proteins (GAPs) which increase the GTP hydrolysis activity. Inhibited by GDP dissociation inhibitors (GDIs). Functionally, RAB40B small GTPase acts as substrate-recognition components of the ECS(RAB40B) E3 ubiquitin ligase complex which mediates the ubiquitination of target proteins. The Rab40 subfamily belongs to the Rab family that are key regulators of intracellular membrane trafficking, from the formation of transport vesicles to their fusion with membranes. Rabs cycle between an inactive GDP-bound form and an active GTP-bound form that is able to recruit to membranes different sets of downstream effectors directly responsible for vesicle formation, movement, tethering and fusion. As part of the ECS(RAB40B) complex, GTP-bound RAB40B promotes LIMA1/EPLIN ubiquitination and degradation, thereby regulating leading-edge actin dynamics during cell migration. As part of the ECS(RAB40B) complex, GTP-bound RAB40B also ubiquitinates RAP2A GTPase which promotes its localization to lamellipodia and activation to drive cell migration. The ECS(RAB40B) complex does not mediate canonical ubiquitin-dependent degradation of RAP2. RAB40B also binds TKS5/SH3PXD2A effector independently from ECS complex to promote invadopodia-mediated extracellular matrix degradation. The protein is Ras-related protein Rab-40B of Homo sapiens (Human).